Reading from the N-terminus, the 591-residue chain is Protein NRT1/ PTR FAMILY 4.3 (591 aa).

Residues 1–10 show a composition bias toward polar residues; the sequence is MAEINKQSNK. Residues 1–38 are disordered; it reads MAEINKQSNKWEQEEVSNENNWELAEEESVDWRGRPSN. 12 helical membrane-spanning segments follow: residues 47 to 67, 85 to 105, 109 to 129, 157 to 177, 204 to 224, 233 to 253, 347 to 367, 395 to 415, 429 to 449, 463 to 483, 502 to 522, and 551 to 571; these read AALF…AVGN, ANIV…GGYL, FLGS…GFIL, GFKA…SGCV, FNAA…LLVW, IGFG…VSGT, LISL…LAQL, AIPY…LVPF, LTRI…AAML, ILSI…EMFT, FLMA…SVLV, and LFYW…LFWS.

This sequence belongs to the major facilitator superfamily. Proton-dependent oligopeptide transporter (POT/PTR) (TC 2.A.17) family. In terms of tissue distribution, expressed in flowers. Detected in roots and siliques.

It localises to the membrane. The polypeptide is Protein NRT1/ PTR FAMILY 4.3 (NPF4.3) (Arabidopsis thaliana (Mouse-ear cress)).